We begin with the raw amino-acid sequence, 507 residues long: ATP synthase subunit alpha, chloroplastic (507 aa).

An ATP-binding site is contributed by G170–T177.

It belongs to the ATPase alpha/beta chains family. F-type ATPases have 2 components, CF(1) - the catalytic core - and CF(0) - the membrane proton channel. CF(1) has five subunits: alpha(3), beta(3), gamma(1), delta(1), epsilon(1). CF(0) has four main subunits: a, b, b' and c.

The protein resides in the plastid. The protein localises to the chloroplast thylakoid membrane. It carries out the reaction ATP + H2O + 4 H(+)(in) = ADP + phosphate + 5 H(+)(out). Its function is as follows. Produces ATP from ADP in the presence of a proton gradient across the membrane. The alpha chain is a regulatory subunit. The chain is ATP synthase subunit alpha, chloroplastic from Ceratophyllum demersum (Rigid hornwort).